The following is a 1615-amino-acid chain: DNA-directed RNA polymerase I subunit rpa1 (1615 aa).

Zn(2+) is bound by residues C65, C68, C75, and H78. The interval 155 to 181 (GKSNEEGEEVMESDESDSDKMDTDENK) is disordered. Acidic residues predominate over residues 160–171 (EGEEVMESDESD). Over residues 172–181 (SDKMDTDENK) the composition is skewed to basic and acidic residues. Mg(2+) contacts are provided by D593, D595, and D597. The interval 955–967 (PQDYFFHCMAGRE) is bridging helix. A compositionally biased stretch (acidic residues) spans 1305-1316 (DSLTINDDDAPA). Positions 1305–1411 (DSLTINDDDA…NSRSSNSFSD (107 aa)) are disordered. Low complexity predominate over residues 1317–1336 (NDDTTNNDENTSQQQPSSQN). A compositionally biased stretch (acidic residues) spans 1366–1399 (EDGEEEAEEKDSDEGESEAEESDDKSDVDSDSDE). Residues 1400-1411 (ISNSRSSNSFSD) show a composition bias toward low complexity.

It belongs to the RNA polymerase beta' chain family. Component of the RNA polymerase I (Pol I) complex consisting of at least 13 subunits.

Its subcellular location is the nucleus. The catalysed reaction is RNA(n) + a ribonucleoside 5'-triphosphate = RNA(n+1) + diphosphate. Functionally, DNA-dependent RNA polymerase catalyzes the transcription of DNA into RNA using the four ribonucleoside triphosphates as substrates. Largest and catalytic core component of RNA polymerase I which synthesizes ribosomal RNA precursors. Forms the polymerase active center together with the second largest subunit. A single stranded DNA template strand of the promoter is positioned within the central active site cleft of Pol I. A bridging helix emanates from RPA1 and crosses the cleft near the catalytic site and is thought to promote translocation of Pol I by acting as a ratchet that moves the RNA-DNA hybrid through the active site by switching from straight to bent conformations at each step of nucleotide addition. This chain is DNA-directed RNA polymerase I subunit rpa1 (polr1a), found in Dictyostelium discoideum (Social amoeba).